Reading from the N-terminus, the 1217-residue chain is Endonuclease YhcR (1217 aa).

A signal peptide spans 1–46 (MLSVEMISRQNRCHYVYKGGNMMRRILHIVLITALMFLNVMYTFEA). The TNase-like domain maps to 376-517 (GEYEGIVDRV…KKDQKGIWNE (142 aa)). Catalysis depends on residues Arg404, Glu412, and Arg460. Residues 590–828 (LRILSMNDLH…VIFAAHNHQV (239 aa)) are phosphoesterase. 6 residues coordinate a divalent metal cation: Asp597, His599, Asp647, Asn680, His792, and His824. A 5'-nucleotidase region spans residues 829-1085 (VNGEVNGKLI…AYTKEGRIKL (257 aa)). Substrate-binding positions include Phe965 and 1035–1042 (FMATATGA). Residues 1087–1142 (EASDIEDPVTEDPITEEPGDDPGTEDPIKEDPRPGEDLPDIKETPGTAPVHQLPPS) are disordered. Acidic residues predominate over residues 1089-1110 (SDIEDPVTEDPITEEPGDDPGT). Over residues 1112–1129 (DPIKEDPRPGEDLPDIKE) the composition is skewed to basic and acidic residues. The LPXTG sorting signal motif lies at 1182–1186 (LPDTS). Position 1185 is a pentaglycyl murein peptidoglycan amidated threonine (Thr1185). Positions 1186–1217 (SAGYYNFMVIGAAVTLSGTYLYVRRKRSASRT) are cleaved as a propeptide — removed by sortase.

The protein in the C-terminal section; belongs to the 5'-nucleotidase family. Requires Ca(2+) as cofactor. Mn(2+) is required as a cofactor.

The protein resides in the secreted. It is found in the cell wall. Its activity is regulated as follows. Requires a minimum of 0.1 mM of calcium for a significant activity. Maximal activity was observed with concentrations of calcium between 1 to 5 mM. Is 10-fold less active with the corresponding concentrations of manganese. Inhibited by NaCl at concentrations of 100 mM and higher. In terms of biological role, sugar-nonspecific endonuclease that yields nucleotide 3'-monophosphate products. No 5'-nucleotidase activity was detected, using 5'-AMP as the substrate, in the presence of diverse divalent metals and with various pH values. The protein is Endonuclease YhcR (yhcR) of Bacillus subtilis (strain 168).